Consider the following 408-residue polypeptide: Innexin-12 (408 aa).

A helical membrane pass occupies residues 29–49; that stretch reads TIGLVLASAFITGWSFVGSPI. Asparagine 99 carries an N-linked (GlcNAc...) asparagine glycan. 3 consecutive transmembrane segments (helical) span residues 113–133, 197–217, and 284–304; these read QWVP…VVIW, VITS…FQFV, and IFVA…TNTI.

This sequence belongs to the pannexin family.

It localises to the cell membrane. The protein resides in the cell junction. The protein localises to the gap junction. Its function is as follows. Structural component of the gap junctions. Plays a role in oocyte directional transit in the spermatheca during ovulation by facilitating the directional propagation of the calcium signal in the spermatheca. Plays a role in male tail tip morphogenesis. This is Innexin-12 from Caenorhabditis elegans.